We begin with the raw amino-acid sequence, 630 residues long: Adagio-like protein 1 (630 aa).

Positions 1–36 are disordered; it reads MEWDSESDGAGSIGAGEEEEEEEEEEEGGFGGGGGG. Residues 16 to 28 are compositionally biased toward acidic residues; the sequence is GEEEEEEEEEEEG. The PAS domain maps to 48–127; that stretch reads IEGMLRASGP…SEIRKCIDNG (80 aa). The residue at position 95 (cysteine 95) is an S-4a-FMN cysteine. Residues 216 to 262 form the F-box domain; the sequence is SSLFQLTDEVLCQSILSRLSPRDIASVSSVCRRLYLLTRNEDLWRMV. Kelch repeat units lie at residues 378–428, 430–481, 483–535, and 549–601; these read LLVV…TLDG, KLVV…VYGG, KILM…AGPP, and RVLI…VVGG.

Belongs to the ADAGIO family. FMN binds covalently to cysteine after exposure to blue light and is reversed in the dark.

The protein resides in the nucleus. It participates in protein modification; protein ubiquitination. In terms of biological role, component of an E3 ubiquitin ligase complex that plays a central role in blue light-dependent circadian cycles. Acts as a blue light photoreceptor, due to the presence of FMN, that mediates light-regulated protein degradation of critical clock components by targeting them to the proteasome complex. This is Adagio-like protein 1 from Oryza sativa subsp. japonica (Rice).